A 706-amino-acid polypeptide reads, in one-letter code: Glycine--tRNA ligase beta subunit (706 aa).

Belongs to the class-II aminoacyl-tRNA synthetase family. As to quaternary structure, tetramer of two alpha and two beta subunits.

It is found in the cytoplasm. The enzyme catalyses tRNA(Gly) + glycine + ATP = glycyl-tRNA(Gly) + AMP + diphosphate. The polypeptide is Glycine--tRNA ligase beta subunit (Hyphomonas neptunium (strain ATCC 15444)).